The following is a 434-amino-acid chain: MTNSNEAQENALSPERQAERDEVLAKAKKAKEVSSQLLLNTQQKNDLLADAADALEANAADIIAANEKDIATGKERGFADSLLDRLALDTERISGIAGGLRQVIGLSDPVGEIVRGHTRPNGLRMKQVRVPLGVMGMVYEARPNVTVDAFGLAIKSGNVPLLRGSKSARHTNEKLVQILQDVAESHNLPRELVQLLPCDTHDSVQDLITARGLVDLVIPRGGAGLINAVVLGATVPTIETGTGNCHFYIDSSADIEEATKLVINGKTRRCSVCNATEVVLLDSALPDPDKIYVLQELQKAGVTLHGEKKQLDPLINDVVQAEETDWTDEYLSFDIAVAIVDGVEEAVAHINRYGTSHTEGIAARDYKTTSYFEQYVDAAAVSINTSTAWTDGEMFGFGAEIGISTQKLHARGPMGLPELTSTKWVINGEGQVRP.

Residues 1–11 show a composition bias toward polar residues; sequence MTNSNEAQENA. A disordered region spans residues 1-26; the sequence is MTNSNEAQENALSPERQAERDEVLAK. The span at 16-25 shows a compositional bias: basic and acidic residues; that stretch reads RQAERDEVLA.

This sequence belongs to the gamma-glutamyl phosphate reductase family.

Its subcellular location is the cytoplasm. The catalysed reaction is L-glutamate 5-semialdehyde + phosphate + NADP(+) = L-glutamyl 5-phosphate + NADPH + H(+). It participates in amino-acid biosynthesis; L-proline biosynthesis; L-glutamate 5-semialdehyde from L-glutamate: step 2/2. In terms of biological role, catalyzes the NADPH-dependent reduction of L-glutamate 5-phosphate into L-glutamate 5-semialdehyde and phosphate. The product spontaneously undergoes cyclization to form 1-pyrroline-5-carboxylate. The sequence is that of Gamma-glutamyl phosphate reductase from Corynebacterium jeikeium (strain K411).